A 156-amino-acid chain; its full sequence is Small ribosomal subunit protein uS7c (156 aa).

Belongs to the universal ribosomal protein uS7 family. In terms of assembly, part of the 30S ribosomal subunit.

It is found in the plastid. The protein localises to the chloroplast. One of the primary rRNA binding proteins, it binds directly to 16S rRNA where it nucleates assembly of the head domain of the 30S subunit. The chain is Small ribosomal subunit protein uS7c (rps7) from Mesostigma viride (Green alga).